The primary structure comprises 273 residues: Cell division protein ZipA (273 aa).

A topological domain (periplasmic) is located at residue Met-1. The helical transmembrane segment at 2–22 (DIGLREWLIVIGIIVIAGILF) threads the bilayer. At 23–273 (DGWRRMRGGK…ERRQMTIKQR (251 aa)) the chain is on the cytoplasmic side. Positions 61–127 (VVNREHEPSL…DLQERPQKEQ (67 aa)) are disordered.

Belongs to the ZipA family. Interacts with FtsZ via their C-terminal domains.

Its subcellular location is the cell inner membrane. Its function is as follows. Essential cell division protein that stabilizes the FtsZ protofilaments by cross-linking them and that serves as a cytoplasmic membrane anchor for the Z ring. Also required for the recruitment to the septal ring of downstream cell division proteins. The protein is Cell division protein ZipA of Stutzerimonas stutzeri (strain A1501) (Pseudomonas stutzeri).